The sequence spans 111 residues: Probable monothiol glutaredoxin 2 (111 aa).

The 103-residue stretch at 7 to 109 (LKFIQNAIKK…KMLKDETKLI (103 aa)) folds into the Glutaredoxin domain. K24 contributes to the glutathione binding site. Residue C32 participates in [2Fe-2S] cluster binding. Glutathione is bound by residues R61, F73, and 86-87 (CD).

The protein belongs to the glutaredoxin family. Monothiol subfamily.

This chain is Probable monothiol glutaredoxin 2 (grxC2), found in Rickettsia typhi (strain ATCC VR-144 / Wilmington).